The following is a 409-amino-acid chain: DEP domain-containing mTOR-interacting protein (409 aa).

Residue Met-1 is modified to N-acetylmethionine. Over residues 1–10 (MEEGSSGGSG) the composition is skewed to gly residues. Residues 1–23 (MEEGSSGGSGSSDSNAGGSGGVQ) are disordered. 2 DEP domains span residues 36–119 (TGEQ…RFRK) and 146–219 (PETT…QFRM). Residues 217–235 (FRMNFRRRRRLMELLNETS) carry the DDEX motif motif. Residue Ser-235 is modified to Phosphoserine. Thr-241 carries the phosphothreonine modification. Phosphoserine is present on residues Ser-244 and Ser-258. Thr-259 is modified (phosphothreonine). Ser-263, Ser-265, Ser-280, Ser-282, Ser-283, Ser-286, and Ser-287 each carry phosphoserine. A BetaTrCP degron motif motif is present at residues 286–291 (SSGYFS). The residue at position 289 (Tyr-289) is a Phosphotyrosine. Residues Ser-291 and Ser-293 each carry the phosphoserine modification. Thr-295 is modified (phosphothreonine). Phosphoserine occurs at positions 297, 298, and 299. Residues 330–407 (TFTIVGDAVG…TIVMEVMEEL (78 aa)) form the PDZ domain.

In terms of assembly, associated component of the mechanistic target of rapamycin complex 1 (mTORC1) which contains MTOR, MLST8 and RPTOR. Associated component of the mechanistic target of rapamycin complex 2 (mTORC2) which contains MTOR, MLST8, PROTOR1, RICTOR, MAPKAP1 and DEPTOR. Interacts (via PDZ domain) with MTOR; interacts with MTOR within both mTORC1 and mTORC2. Interacts (via PDZ domain) with MINAR1 (via N-terminus). Interacts with SIK3. Post-translationally, phosphorylation weakens interaction with MTOR within mTORC1 and mTORC2. Phosphorylated at Ser-286, Ser-287 and Ser-291 in response to mitogenic stimulation by MTOR: DEPTOR is either directly phosphorylated by MTOR or indirectly via proteins kinases that are activated by MTOR, such as CK1/CSNK1A1. Phosphorylation at Ser-286, Ser-287 and Ser-291 promotes ubiquitination by the SCF(BTRC) complex, followed by degradation. Phosphorylation at Ser-235 by MAPK3/ERK1 promotes deubiquitination by USP7, enhancing its stability. Phosphorylation at Tyr-291 by SYK impairs its interaction with MTOR, promoting mTORC1 and mTORC2 signaling. In terms of processing, ubiquitinated; leading to proteasomal degradation. Ubiquitination by the SCF(BTRC) and SCF(FBXW11) complexes following phosphorylation at Ser-286, Ser-287 and Ser-291 by MTOR, leads to its degradation by the proteasome. Deubiquitinated by OTUB1 in response to amino acid via a non-canonical mechanism, leading to DEPTOR stability. Deubiquitinated by USP7 following phosphorylation at Ser-235, promoting its stability.

The protein localises to the lysosome membrane. With respect to regulation, inhibited upon phosphatidic acid-binding: phosphatidic acid produced upon mitogenic stimulation promotes DEPTOR dissociatiom from the mTORC1 and mTORC2 complexes, leading to their activation. Specifically binds unsaturated phosphatidic acid, such as 16:0-18:1, 18:0-18:1 and di-18:1. Inhibited when nutrients are present via a feedback loop: phosphorylation by MTOR promotes DEPTOR ubiquitination and degradation. Functionally, negative regulator of the mTORC1 and mTORC2 complexes: inhibits the protein kinase activity of MTOR, thereby inactivating both complexes. DEPTOR inhibits mTORC1 and mTORC2 to induce autophagy. In contrast to AKT1S1/PRAS40, only partially inhibits mTORC1 activity. This is DEP domain-containing mTOR-interacting protein from Mus musculus (Mouse).